The sequence spans 1511 residues: Bifunctional glutamate/proline--tRNA ligase (1511 aa).

A glutamate--tRNA ligase region spans residues 164–758 (GTKWDVSENK…SSVLYNRVAA (595 aa)). The 'HIGH' region motif lies at 204–214 (PEASGYLHIGH). A disordered region spans residues 296–315 (AEQMKAEREQRAESKHRQNS). Basic and acidic residues predominate over residues 299–315 (MKAEREQRAESKHRQNS). Lys300 carries the post-translational modification N6-acetyllysine; alternate. Residue Lys300 is modified to N6-malonyllysine; alternate. Thr355 carries the post-translational modification Phosphothreonine. The residue at position 417 (Lys417) is an N6-acetyllysine. The 'KMSKS' region signature appears at 432–436 (VLSKR). Ser434 carries the phosphoserine modification. Lys498, Lys535, Lys542, and Lys637 each carry N6-acetyllysine. The segment covering 708–728 (KEMPTSGSKEKTKAEPLKKET) has biased composition (basic and acidic residues). The segment at 708-741 (KEMPTSGSKEKTKAEPLKKETSSAPKEGPVPAVS) is disordered. Ser746 is modified (phosphoserine). Residues 748–804 (ESSVLYNRVAAQGDVVRELKAKKAAKEDVDAAVKQLLALKAEYKQKTGQEYKPGNPP) form the WHEP-TRS 1 domain. Residues 759–955 (QGDVVRELKA…GIEYKPVSAT (197 aa)) form a 3 X 57 AA approximate repeats region. An N6-acetyllysine modification is found at Lys787. Residues 794–823 (TGQEYKPGNPPSAAAQSASTKSLPSAGEDR) are disordered. A compositionally biased stretch (polar residues) spans 807 to 816 (AAQSASTKSL). A WHEP-TRS 2 domain is found at 821-877 (EDRSLYDKIAAQGEVVRKLKAEKAPKAKVTEAVECLLSLKAEYKEKTGKEYVPGQPP). Lys860 carries the post-translational modification N6-acetyllysine. Disordered regions lie at residues 868-903 (GKEY…AKAL) and 952-1015 (VSAT…RLGL). Tyr871 is modified (phosphotyrosine). Positions 877 to 890 (PASQKSQPSPASKA) are enriched in low complexity. Ser885 is modified (phosphoserine; by CDK5). Position 897 is a phosphothreonine (Thr897). The WHEP-TRS 3 domain maps to 899 to 955 (EAKALFDRVACQGEVVRKLKAEKASKDQVDPAVQELLQLKAQYKSLTGIEYKPVSAT). The segment covering 957–975 (SEDKDKKKKEKENKSEKQN) has biased composition (basic and acidic residues). Gly residues predominate over residues 992–1005 (QGGGLSSSGAGEGQ). Ser997 is modified (phosphoserine). Ser998 carries the post-translational modification Phosphoserine; by RPS6KB1. Ser999 carries the phosphoserine modification. Residues 1006 to 1511 (GPKKQTRLGL…KFYTLFGRSY (506 aa)) are proline--tRNA ligase. L-proline-binding positions include 1120–1122 (TSE) and Arg1151. Positions 1151, 1153, 1162, 1163, 1236, and 1239 each coordinate ATP. Residue Arg1151 is modified to Omega-N-methylarginine. Residue Gln1236 participates in Mg(2+) binding. His1241 serves as a coordination point for L-proline. Positions 1275 and 1277 each coordinate ATP. Residue Ser1349 is modified to Phosphoserine. The Zn(2+) site is built by Cys1447, Cys1452, Cys1494, and Cys1496. Lys1502 is modified (N6-acetyllysine).

The protein in the N-terminal section; belongs to the class-I aminoacyl-tRNA synthetase family. Glutamate--tRNA ligase type 2 subfamily. It in the C-terminal section; belongs to the class-II aminoacyl-tRNA synthetase family. In terms of assembly, homodimer. Part of the aminoacyl-tRNA synthetase multienzyme complex, also know as multisynthetase complex, that is composed of the tRNA ligases for Arg (RARS1), Asp (DARS1), Gln (QARS1), Ile (IARS1), Leu (LARS1), Lys (KARS1), Met (MARS1) the bifunctional ligase for Glu and Pro (EPRS1) and the auxiliary subunits AIMP1/p43, AIMP2/p38 and EEF1E1/p18. Forms a linear complex that contains MARS1, EEF1E1, EPRS1 and AIMP2 that is at the core of the multisubunit complex. Interacts with TARS3. Interacts with DUS2L. Component of the GAIT complex which is composed of EPRS1, RPL13A and GAPDH. Interacts (phosphorylated at Ser-998) with SLC27A1; mediates the translocation of SLC27A1 from the cytoplasm to the plasma membrane thereby increasing the uptake of long-chain fatty acids. In terms of processing, phosphorylated at Ser-998 by RPS6KB1; triggers EPRS1 release from the aminoacyl-tRNA synthetase multienzyme complex. In monocytes, the IFN-gamma-induced phosphorylation at Ser-998 releases EPRS1 from the aminoacyl-tRNA synthetase multienzyme complex, allowing its association with the GAIT complex. Phosphorylation at Ser-998 is specifically required for the RPL13A-mediated interaction of the GAIT complex with eIF4G. Phosphorylation at Ser-998 by RPS6KB1, is also induced by insulin through activation of the mTORC1 signaling pathway and promotes the interaction of EPRS1 with SLC27A1.

It is found in the cytoplasm. Its subcellular location is the cytosol. The protein resides in the membrane. The catalysed reaction is tRNA(Glu) + L-glutamate + ATP = L-glutamyl-tRNA(Glu) + AMP + diphosphate. It catalyses the reaction tRNA(Pro) + L-proline + ATP = L-prolyl-tRNA(Pro) + AMP + diphosphate. Its function is as follows. Multifunctional protein which primarily functions within the aminoacyl-tRNA synthetase multienzyme complex, also known as multisynthetase complex. Within the complex it catalyzes the attachment of both L-glutamate and L-proline to their cognate tRNAs in a two-step reaction where the amino acid is first activated by ATP to form a covalent intermediate with AMP. Subsequently, the activated amino acid is transferred to the acceptor end of the cognate tRNA to form L-glutamyl-tRNA(Glu) and L-prolyl-tRNA(Pro). Upon interferon-gamma stimulation, EPRS1 undergoes phosphorylation, causing its dissociation from the aminoacyl-tRNA synthetase multienzyme complex. It is recruited to form the GAIT complex, which binds to stem loop-containing GAIT elements found in the 3'-UTR of various inflammatory mRNAs, such as ceruloplasmin. The GAIT complex inhibits the translation of these mRNAs, allowing interferon-gamma to redirect the function of EPRS1 from protein synthesis to translation inhibition in specific cell contexts. Furthermore, it can function as a downstream effector in the mTORC1 signaling pathway, by promoting the translocation of SLC27A1 from the cytoplasm to the plasma membrane where it mediates the uptake of long-chain fatty acid by adipocytes. Thereby, EPRS1 also plays a role in fat metabolism and more indirectly influences lifespan. This is Bifunctional glutamate/proline--tRNA ligase from Cricetulus griseus (Chinese hamster).